Here is a 662-residue protein sequence, read N- to C-terminus: MEGAPTVRQVMNEGDSSLATELQEDVEENPSPTVEENNVVVKKQGPNLHNWSGDWSFWISSSTYKDRNEEYRRQFTHLPDTERLIADYACALQRDILLQGRLYLSENWLCFYSNIFRWETTISIALKNITFMTKEKTARLIPNAIQIVTESEKFFFTSFGARDRSYLSIFRLWQNVLLDKSLTRQEFWQLLQQNYGTELGLNAEEMENLSLSIEDVRPRSPGRSSLDDSGERDEKLSKSISFTSESISRVSETESFDGNSSKGGLGKEESQNEKQTKKSLLPTLEKKLTRVPSKSLDLNKNEYLSLEKSSTSDSVDEENVPEKDLHGRLFINRIFHISADRMFELLFTSSRFMQKFASSRNIIDVVSTPWTAELGGDQLRTMTYTIVLNSPLTGKCTAATEKQTLYKESREARFYMVDSEVLTHDVPYHDYFYTVDRYCIIRSSKQKCRLRVSTDLKYRKQPWGLVKSLIEKNSWGSLEDYFKHLESDLLIEESILNQAIEDPGKLTGLRRRRRTFNRTAETVPKLSSQHSSGDVGLGTKADITGKKKEMENYNITLIVVMSIFVLLLVLLNVTLFLKLSKIEHAAQSFYRLRLQEEKSLNLASDVVSRAETIQNNKDQAHRLKGVLRDSIVMLEQLKSSLIMLQKTFDLLNKNKTGMAVES.

The segment at 1-34 (MEGAPTVRQVMNEGDSSLATELQEDVEENPSPTV) is disordered. The GRAM domain occupies 69–136 (EEYRRQFTHL…KNITFMTKEK (68 aa)). 2 disordered regions span residues 212–237 (SIED…EKLS) and 250–284 (VSET…LPTL). Residues 265-276 (LGKEESQNEKQT) are compositionally biased toward basic and acidic residues. One can recognise a VASt domain in the interval 326 to 497 (HGRLFINRIF…DLLIEESILN (172 aa)). A helical transmembrane segment spans residues 557 to 577 (LIVVMSIFVLLLVLLNVTLFL).

The protein resides in the endoplasmic reticulum membrane. Its subcellular location is the cell membrane. Its function is as follows. Cholesterol transporter that mediates non-vesicular transport of cholesterol from the plasma membrane (PM) to the endoplasmic reticulum (ER). Contains unique domains for binding cholesterol and the PM, thereby serving as a molecular bridge for the transfer of cholesterol from the PM to the ER. Plays a crucial role in cholesterol homeostasis and has the unique ability to localize to the PM based on the level of membrane cholesterol. In lipid-poor conditions localizes to the ER membrane and in response to excess cholesterol in the PM is recruited to the endoplasmic reticulum-plasma membrane contact sites (EPCS) which is mediated by the GRAM domain. At the EPCS, the sterol-binding VASt/ASTER domain binds to the cholesterol in the PM and facilitates its transfer from the PM to ER. The polypeptide is Protein Aster-C (GRAMD1C) (Pongo abelii (Sumatran orangutan)).